The following is a 582-amino-acid chain: uncharacterized protein (582 aa).

12 helical membrane-spanning segments follow: residues 29 to 49 (LFIVLLRFIIPSILVSFFAAL), 117 to 137 (ISAPITVIINALTLLITMGLA), 155 to 175 (VWATGFITNVIVSIATSMIIV), 225 to 245 (YVYILAGLFTIQTFNQMYFLL), 254 to 274 (FISIIPPLANLINILFDYLLI), 287 to 307 (ATVIGWSLSCLAYVIYNIVLI), 329 to 349 (YLYLIILIGLASFFRNAALSV), 376 to 396 (SIFGSVTPISNLMLQSVWGLI), 432 to 452 (IVYLLFGFGLNNIFLINLFNI), 458 to 478 (LVVSNLVLRITLVQSIFIALS), 491 to 511 (IGMAWIASLMQGLFTFAPVFF), and 523 to 543 (IYLYIWIQPINAILTCIGNWI).

Its subcellular location is the cell membrane. This is an uncharacterized protein from Mycoplasmoides gallisepticum (strain R(low / passage 15 / clone 2)) (Mycoplasma gallisepticum).